A 496-amino-acid chain; its full sequence is Mothers against decapentaplegic homolog 6 (496 aa).

Over residues 1–15 (MFRSKRSGLVRRLWR) the composition is skewed to basic residues. Disordered regions lie at residues 1 to 116 (MFRS…PGWL) and 136 to 156 (GAPRDASDPLAGAALEPAGGG). Dimethylated arginine; alternate is present on residues arginine 75 and arginine 82. Arginine 75 and arginine 82 each carry omega-N-methylarginine; alternate. In terms of domain architecture, MH1 spans 148 to 275 (AALEPAGGGR…FSRLCGPESP (128 aa)). Residue lysine 173 forms a Glycyl lysine isopeptide (Lys-Gly) (interchain with G-Cter in ubiquitin) linkage. Zn(2+)-binding residues include cysteine 205, cysteine 247, cysteine 260, and histidine 265. The MH2 domain occupies 331–496 (WCSVAYWEHR…WLEILLNNPR (166 aa)). The residue at position 435 (serine 435) is a Phosphoserine; by PRKX; in vitro.

The protein belongs to the dwarfin/SMAD family. As to quaternary structure, interacts with NEDD4L. Interacts with WWP1. Interacts with STAMBP and PRKX. Interacts with RNF111 and AXIN1. Interacts with TGF-beta type I receptor superfamily members, including ACVR1B, BMPR1B and TGFBR1. In response to BMP2, but not to TGFB treatment, interacts with SMAD1, but not with SMAD2, nor with SMAD4; this interaction may inhibit SMAD1 binding to SMAD4. Interacts with HOXC8 and HOXC9. Interacts with PELI1; this interaction interferes with PELI1 complex formation with TRAF6, IRAK1, IRAK4 and MYD88 in response to IL1B and hence negatively regulates IL1R-TLR signaling. Interacts with TSC22D1/TSC-22. Post-translationally, phosphorylated by BMP type 1 receptor kinase and by PRKX. In terms of processing, monoubiquitinated at Lys-173 by the E2/E3 hybrid ubiquitin-protein ligase UBE2O, leading to reduced binding affinity for the activated BMP type I receptor ACVR1/ALK2, thereby enhancing BMP7 and regulating adipocyte differentiation. Ubiquitinated by WWP1. Ubiquitinated by ARK2C, promoting proteasomal degradation, leading to enhance the BMP-Smad signaling. Arginine methylation by PRMT1, which is recruited by BMPR2, initiates BMP-Induced signaling and induces dissociation from the BMPR1B receptor at the cell surface leading to derepress downstream Smad1/Smad5 signaling. As to expression, expressed in the brain, heart, ovary, peripheral blood leukocytes, small intestine, spleen, thymus, bone marrow, fetal liver and lymph nodes.

It localises to the nucleus. Functionally, transforming growth factor-beta superfamily receptors signaling occurs through the Smad family of intracellular mediators. SMAD6 is an inhibitory Smad (i-Smad) that negatively regulates signaling downstream of type I transforming growth factor-beta. Acts as a mediator of TGF-beta and BMP anti-inflammatory activities. Suppresses IL1R-TLR signaling through its direct interaction with PEL1, preventing NF-kappa-B activation, nuclear transport and NF-kappa-B-mediated expression of pro-inflammatory genes. Blocks the BMP-SMAD1 signaling pathway by competing with SMAD4 for receptor-activated SMAD1-binding. Binds to regulatory elements in target promoter regions. The polypeptide is Mothers against decapentaplegic homolog 6 (SMAD6) (Homo sapiens (Human)).